The following is a 138-amino-acid chain: Putative nickel-responsive regulator (138 aa).

Residues histidine 78, histidine 89, histidine 91, and cysteine 97 each contribute to the Ni(2+) site.

This sequence belongs to the transcriptional regulatory CopG/NikR family. It depends on Ni(2+) as a cofactor.

Transcriptional regulator. This is Putative nickel-responsive regulator from Thermococcus kodakarensis (strain ATCC BAA-918 / JCM 12380 / KOD1) (Pyrococcus kodakaraensis (strain KOD1)).